The sequence spans 390 residues: Two-component response regulator ORR29 (390 aa).

The 118-residue stretch at 13-130 (SAMVIDEDKC…TIKNLWQYVD (118 aa)) folds into the Response regulatory domain. At Asp65 the chain carries 4-aspartylphosphate. Positions 169–226 (KKYYLMWTPHLQKKFLHALQILGKDASPKNIKKIMGVDNIDCRQIAAHLQKHRLRLTK) form a DNA-binding region, myb-like GARP. Disordered regions lie at residues 233–271 (FTTD…QPTE) and 303–339 (SKHS…SGDH). Residues 257-271 (NASTLQPRSNTQPTE) show a composition bias toward polar residues.

The protein belongs to the ARR family. Type-B subfamily. Two-component system major event consists of a His-to-Asp phosphorelay between a sensor histidine kinase (HK) and a response regulator (RR). In plants, the His-to-Asp phosphorelay involves an additional intermediate named Histidine-containing phosphotransfer protein (HPt). This multistep phosphorelay consists of a His-Asp-His-Asp sequential transfer of a phosphate group between first a His and an Asp of the HK protein, followed by the transfer to a conserved His of the HPt protein and finally the transfer to an Asp in the receiver domain of the RR protein.

The protein resides in the cytoplasm. It localises to the cytosol. Its subcellular location is the nucleus. Transcriptional activator that binds specific DNA sequence. Functions as a response regulator involved in His-to-Asp phosphorelay signal transduction system. Phosphorylation of the Asp residue in the receiver domain activates the ability of the protein to promote the transcription of target genes. May directly activate some type-A response regulators in response to cytokinins. Functions as a response regulator in response to cytokinins. This is Two-component response regulator ORR29 from Oryza sativa subsp. japonica (Rice).